We begin with the raw amino-acid sequence, 629 residues long: Probable alpha-L-arabinofuranosidase A (629 aa).

A signal peptide spans 1 to 25; the sequence is MVALSTLSGLSALPFLFSLVQNVYG. 9 N-linked (GlcNAc...) asparagine glycosylation sites follow: Asn36, Asn51, Asn140, Asn152, Asn168, Asn171, Asn260, Asn494, and Asn534.

This sequence belongs to the glycosyl hydrolase 51 family.

It is found in the secreted. The enzyme catalyses Hydrolysis of terminal non-reducing alpha-L-arabinofuranoside residues in alpha-L-arabinosides.. It functions in the pathway glycan metabolism; L-arabinan degradation. Its function is as follows. Alpha-L-arabinofuranosidase involved in the degradation of arabinoxylan, a major component of plant hemicellulose. Acts only on small linear 1,5-alpha-linked L-arabinofuranosyl oligosaccharides. The protein is Probable alpha-L-arabinofuranosidase A (abfA) of Aspergillus flavus (strain ATCC 200026 / FGSC A1120 / IAM 13836 / NRRL 3357 / JCM 12722 / SRRC 167).